Consider the following 208-residue polypeptide: NAD(P)H dehydrogenase (quinone) (208 aa).

The region spanning 4–199 is the Flavodoxin-like domain; that stretch reads VNVIFHSIHG…AMARYQGRHV (196 aa). FMN is bound by residues 10 to 15 and 87 to 89; these read SIHGHT and TRY. W107 contacts substrate. FMN is bound by residues 122-128 and H143; that span reads SSGTQHG.

It belongs to the WrbA family. FMN serves as cofactor.

It catalyses the reaction a quinone + NADH + H(+) = a quinol + NAD(+). It carries out the reaction a quinone + NADPH + H(+) = a quinol + NADP(+). This chain is NAD(P)H dehydrogenase (quinone), found in Methanosarcina barkeri (strain Fusaro / DSM 804).